The chain runs to 187 residues: Large ribosomal subunit protein eL18y (187 aa).

Positions 151-187 (FGPAPGVPHSHSKPYVRAKGRKFEKARGKRKSRGFKV) are disordered. Composition is skewed to basic residues over residues 160 to 170 (SHSKPYVRAKG) and 177 to 187 (RGKRKSRGFKV).

The protein belongs to the eukaryotic ribosomal protein eL18 family. In terms of assembly, interacts with NIK1. Interacts directly with EXA1. As to expression, ubiquitous.

The protein localises to the cytoplasm. This is Large ribosomal subunit protein eL18y (RPL18B) from Arabidopsis thaliana (Mouse-ear cress).